Reading from the N-terminus, the 82-residue chain is Turripeptide Gdm9.1 (82 aa).

Positions 1–23 (MMAKLMITVMMVLLLSLQQGADG) are cleaved as a signal peptide. Residues 24–46 (RSERWRKNQMAASRIMRNLITAR) constitute a propeptide that is removed on maturation. Proline 49 and proline 50 each carry 4-hydroxyproline. 3 cysteine pairs are disulfide-bonded: cysteine 53-cysteine 68, cysteine 58-cysteine 72, and cysteine 64-cysteine 79. Residues glutamate 60 and glutamate 63 each carry the 4-carboxyglutamate modification.

Belongs to the Pg turripeptide superfamily. Expressed by the venom duct.

It localises to the secreted. This is Turripeptide Gdm9.1 from Gemmula diomedea (Gem-turris).